The following is a 552-amino-acid chain: Ferry endosomal RAB5 effector complex subunit 3 (552 aa).

Residues 383–403 (LKESLDSGNQNGGNDDKTKNA) form a disordered region.

Component of the FERRY complex composed of five subunits, TBCK, PPP1R21, FERRY3, CRYZL1 and GATD1 with a ratio of 1:2:1:2:4, respectively.

The protein localises to the cytoplasm. It is found in the early endosome. Functionally, component of the FERRY complex (Five-subunit Endosomal Rab5 and RNA/ribosome intermediary). The FERRY complex directly interacts with mRNAs and RAB5A, and functions as a RAB5A effector involved in the localization and the distribution of specific mRNAs most likely by mediating their endosomal transport. The complex recruits mRNAs and ribosomes to early endosomes through direct mRNA-interaction. Plays a role in mast cell degranulation. The sequence is that of Ferry endosomal RAB5 effector complex subunit 3 from Homo sapiens (Human).